We begin with the raw amino-acid sequence, 484 residues long: MTTSGVRVRIAPSPTGEPHVGTAYIALFNYLFAKKHGGEFILRIEDTDATRSTPEFETKVLDALKWCGLEWKEGPDIGGPYGPYRQSDRKPMYQPYAEELLDKGHAFRCFCTPARLEQMREAQRAAGKPPKYDGLCLSLTAEEVTSRMAAGETTVIRMKIPAEGSCDFTDGVYGDVSIPWDSVDMQVLIKADGMPTYHMANVIDDHLMKITHVARGEEWLASVPKHILLYRYFGWDQPVFMHLSLMRNADKSKLSKRKNPTSISYYSALGYIPEALMNFLGLFFIQIAEGEELLTMEELSAKFDPENLSKAGAIFDIQKLDWLNGRWIREKLSEEEFQARVLAWAMENDRLKAGLRLSQTRISKLGELPDLAGFLLKSDLGLQPSDFAKIKSPPEEILEILNTVQPDLEKILEWNVETIEAELRAIADRMGKKLKVVVSPLFVAVSGSSRSLPLFDSMAILGRSVVRQRLKLAAQAVAALVGSK.

The short motif at 12–22 is the 'HIGH' region element; sequence PSPTGEPHVGT. A 'KMSKS' region motif is present at residues 253 to 257; the sequence is KLSKR. Residue Lys256 coordinates ATP.

The protein belongs to the class-I aminoacyl-tRNA synthetase family. Glutamate--tRNA ligase type 1 subfamily. As to quaternary structure, monomer.

Its subcellular location is the cytoplasm. The enzyme catalyses tRNA(Glu) + L-glutamate + ATP = L-glutamyl-tRNA(Glu) + AMP + diphosphate. Catalyzes the attachment of glutamate to tRNA(Glu) in a two-step reaction: glutamate is first activated by ATP to form Glu-AMP and then transferred to the acceptor end of tRNA(Glu). In Rhizobium leguminosarum bv. trifolii (strain WSM2304), this protein is Glutamate--tRNA ligase.